The sequence spans 210 residues: Na(+)-translocating NADH-quinone reductase subunit D (210 aa).

6 helical membrane passes run 9-29, 42-62, 72-92, 96-116, 131-151, and 178-198; these read AVLF…LGIC, LIMS…ISTI, IIVQ…VLQA, ATAK…IVMG, FLDG…VGFI, and MGLL…IWVL.

Belongs to the NqrDE/RnfAE family. Composed of six subunits; NqrA, NqrB, NqrC, NqrD, NqrE and NqrF.

It localises to the cell inner membrane. The enzyme catalyses a ubiquinone + n Na(+)(in) + NADH + H(+) = a ubiquinol + n Na(+)(out) + NAD(+). In terms of biological role, NQR complex catalyzes the reduction of ubiquinone-1 to ubiquinol by two successive reactions, coupled with the transport of Na(+) ions from the cytoplasm to the periplasm. NqrA to NqrE are probably involved in the second step, the conversion of ubisemiquinone to ubiquinol. The sequence is that of Na(+)-translocating NADH-quinone reductase subunit D from Pseudoalteromonas translucida (strain TAC 125).